The following is a 391-amino-acid chain: MSLNPRDVVIVDFGRTPMGRSKGGMHRNTRAEDMSAHLISKLLERNNKVDPAEVEDVIWGCVNQTLEQGWNIARMASLLTQIPHTSAAQTVSRLCGSSMSALHTAAQAIMTNNGDVFIIGGVEHMGHVSMMHGVDPNPHMSLHAAKASGMMGLTAEMLGKMHGITREQQDAFGLRSHQLAHKATLEGKFKDEIIPMQGYDENGFLKVFDYDETIRPDTTLESLAALKPAFNPKGGTVTAGTSSQITDGASCMIVMSAQRAQDLGIQPMAVIRSMAVAGVDPAIMGYGPVPATQKALKRAGLSIADIDFFELNEAFAAQALPVLKDLKVLDKMNEKVNLHGGAIALGHPFGCSGARISGTLLNVMKQNGGTFGVSTMCIGLGQGIATVFERV.

The active-site Acyl-thioester intermediate is the Cys95. Active-site proton acceptor residues include His347 and Cys377.

It belongs to the thiolase-like superfamily. Thiolase family. As to quaternary structure, heterotetramer of two alpha chains (FadB) and two beta chains (FadA).

The protein localises to the cytoplasm. The enzyme catalyses an acyl-CoA + acetyl-CoA = a 3-oxoacyl-CoA + CoA. It functions in the pathway lipid metabolism; fatty acid beta-oxidation. Functionally, catalyzes the final step of fatty acid oxidation in which acetyl-CoA is released and the CoA ester of a fatty acid two carbons shorter is formed. The polypeptide is 3-ketoacyl-CoA thiolase (Pseudomonas syringae pv. syringae (strain B728a)).